We begin with the raw amino-acid sequence, 340 residues long: Thermopsin (340 aa).

The signal sequence occupies residues 1 to 28 (MNFKSICLIILLSALIIPYIPQNIYFFP). The propeptide occupies 29–41 (HRNTTGATISSGL). 10 N-linked (GlcNAc...) asparagine glycosylation sites follow: Asn-31, Asn-65, Asn-85, Asn-117, Asn-148, Asn-197, Asn-277, Asn-287, Asn-327, and Asn-334.

Belongs to the peptidase A5 family.

The protein resides in the secreted. It carries out the reaction Specificity similar to pepsin A, prefers bulky hydrophobic side-chains on either side of the scissible bond.. In terms of biological role, may represent a new class of acid proteases. It digests proteins and peptides in acidic solution. The sequence is that of Thermopsin (thpS) from Sulfolobus acidocaldarius (strain ATCC 33909 / DSM 639 / JCM 8929 / NBRC 15157 / NCIMB 11770).